The following is a 276-amino-acid chain: A-factor receptor protein (276 aa).

The HTH tetR-type domain maps to 8–68 (VQTWRSIVDA…AIMDEQTSTV (61 aa)). Positions 31–50 (AISEILRRAKVTKGALYFHF) form a DNA-binding region, H-T-H motif. The span at 207–220 (EKAEREEQEARIAA) shows a compositional bias: basic and acidic residues. A disordered region spans residues 207–276 (EKAEREEQEA…AGVAAGGVVA (70 aa)). A compositionally biased stretch (low complexity) spans 221–235 (EAKGAGSDAATDSGS). A compositionally biased stretch (gly residues) spans 236-257 (RSGGSGLRGGGSGRGPRAGGAG).

As to quaternary structure, homodimer or multimer. Binds to both DNA and A-factor as a homodimer.

The protein localises to the cytoplasm. Represses adpA expression by binding to the promoter region in the absence of A-factor, causing repression of streptomycin production and of sporulation. In Streptomyces griseus, this protein is A-factor receptor protein (arpA).